Here is a 783-residue protein sequence, read N- to C-terminus: MAACRLCCLCPCLRPLGCGPLGRPGRNRALSYLQMRALWSSTGSRAVTVDLGHRKLEISSGKLARFADGCAVIQSGDTAVMVTAVSKTKASPSQFMPLVVDYRQKAAAAGRIPTNYLRREIGSSDREVLTSRVIDRSIRPLFPAGYFYDTQVLCNLLAVDGINEPDILAVNGASVALSLSDIPWNGPVGAVRIGMIDGECVVNPTRREMSSSTLNLVVAGAPKSQIVMLEASAENILQQDFCHAIKVGVKYTQQIIQGIQQLVKEIGVAKRTPQKIFTPSAEIVKYTKIIAMEKLYAVFTDYEHDKVSRDEAVNKIRLDTEEHLKEKFPEVDQFEIIESFNIVAKEVFRSIILNEYKRCDGRDLTSLRNISCEVDMFKTLHGSALFQRGQTQVLCTVTFDSLESSIKSDQIITAINGVKDKNFMLHYEFPPYATNETGKVTGVNRRELGHGALAEKALCPVIPKDFPFTIRVTSEVLESNGSSSMASACGGSLALMDAGVPISSAVAGVAVGLVTKTNPEKGEIEDYRLLTDILGIEDYNGDMDFKIAGTNKGITALQADIKLPGVPIKIIMEAIQQASVAKKEILQIMNKTISKPRASRKENGPVVETVKVPLSKRAKFVGPGGYHLKKLQAETGVTISQVDEETFSIFAPTPTAMHEARDFITEICRDDQEQQLEFGAVYTATITEIRDTGVMVKLYPNMTAVLLHNSQLDQRKIKHPTALGLEVGQEIQVKYFGRDPADGRMRLSRKVLQSPATTALKTLNDRSSIVMGEPVSQSSNSNP.

The N-terminal 45 residues, 1–45, are a transit peptide targeting the mitochondrion; sequence MAACRLCCLCPCLRPLGCGPLGRPGRNRALSYLQMRALWSSTGSR. An N6-acetyllysine mark is found at K250, K264, and K285. K552 carries the N6-succinyllysine modification. The region spanning 605–664 is the KH domain; sequence PVVETVKVPLSKRAKFVGPGGYHLKKLQAETGVTISQVDEETFSIFAPTPTAMHEARDFI. The S1 motif domain occupies 679–750; it reads GAVYTATITE…ADGRMRLSRK (72 aa). S754 bears the Phosphoserine mark.

The protein belongs to the polyribonucleotide nucleotidyltransferase family. Homotrimer; in free form. Homooligomer. Component of the mitochondrial degradosome (mtEXO) complex which is a heteropentamer containing 2 copies of SUPV3L1 and 3 copies of PNPT1. As part of the mitochondrial degradosome complex, interacts with GRSF1 in an RNA-dependent manner; the interaction enhances the activity of the complex. Interacts with TCL1A; the interaction has no effect on PNPT1 exonuclease activity.

The protein localises to the cytoplasm. Its subcellular location is the mitochondrion matrix. It is found in the mitochondrion intermembrane space. The catalysed reaction is RNA(n+1) + phosphate = RNA(n) + a ribonucleoside 5'-diphosphate. In terms of biological role, RNA-binding protein implicated in numerous RNA metabolic processes. Catalyzes the phosphorolysis of single-stranded polyribonucleotides processively in the 3'-to-5' direction. Mitochondrial intermembrane factor with RNA-processing exoribonulease activity. Component of the mitochondrial degradosome (mtEXO) complex, that degrades 3' overhang double-stranded RNA with a 3'-to-5' directionality in an ATP-dependent manner. Involved in the degradation of non-coding mitochondrial transcripts (MT-ncRNA) and tRNA-like molecules. Required for correct processing and polyadenylation of mitochondrial mRNAs. Plays a role as a cytoplasmic RNA import factor that mediates the translocation of small RNA components, like the 5S RNA, the RNA subunit of ribonuclease P and the mitochondrial RNA-processing (MRP) RNA, into the mitochondrial matrix. Plays a role in mitochondrial morphogenesis and respiration; regulates the expression of the electron transport chain (ETC) components at the mRNA and protein levels. In the cytoplasm, shows a 3'-to-5' exoribonuclease mediating mRNA degradation activity; degrades c-myc mRNA upon treatment with IFNB1/IFN-beta, resulting in a growth arrest in melanoma cells. Regulates the stability of specific mature miRNAs in melanoma cells; specifically and selectively degrades miR-221, preferentially. Also plays a role in RNA cell surveillance by cleaning up oxidized RNAs. Binds to the RNA subunit of ribonuclease P, MRP RNA and miR-221 microRNA. The sequence is that of Polyribonucleotide nucleotidyltransferase 1, mitochondrial (Pnpt1) from Mus musculus (Mouse).